We begin with the raw amino-acid sequence, 244 residues long: Cell division protein ZapD (244 aa).

It belongs to the ZapD family. As to quaternary structure, interacts with FtsZ.

The protein localises to the cytoplasm. Cell division factor that enhances FtsZ-ring assembly. Directly interacts with FtsZ and promotes bundling of FtsZ protofilaments, with a reduction in FtsZ GTPase activity. The chain is Cell division protein ZapD from Shewanella baltica (strain OS185).